Consider the following 421-residue polypeptide: Medium-chain specific acyl-CoA dehydrogenase, mitochondrial (421 aa).

The N-terminal 25 residues, 1-25 (MAAGFGRCCRVLRSISRFHWRSQHT), are a transit peptide targeting the mitochondrion. An N6-acetyllysine; alternate modification is found at lysine 69. Lysine 69 is subject to N6-succinyllysine; alternate. An FAD-binding site is contributed by 158 to 167 (YCVTEPGAGS). Serine 167 is an octanoyl-CoA binding site. Lysine 179 bears the N6-succinyllysine mark. 191-193 (WIT) is a binding site for FAD. N6-acetyllysine; alternate occurs at positions 212, 217, 259, and 271. Residues lysine 212, lysine 217, lysine 259, and lysine 271 each carry the N6-succinyllysine; alternate modification. An octanoyl-CoA-binding site is contributed by aspartate 278. The residue at position 279 (lysine 279) is an N6-acetyllysine. Arginine 281 contacts octanoyl-CoA. Lysine 301 bears the N6-acetyllysine mark. FAD-binding positions include 306 to 308 (RKT) and 316 to 317 (HQ). A Phosphothreonine modification is found at threonine 351. FAD is bound by residues 374–378 (QILGG) and 401–405 (EGTSQ). Glutamate 401 provides a ligand contact to octanoyl-CoA. The Proton acceptor role is filled by glutamate 401.

This sequence belongs to the acyl-CoA dehydrogenase family. As to quaternary structure, homotetramer. Interacts with the heterodimeric electron transfer flavoprotein ETF. FAD serves as cofactor. Post-translationally, acetylated. Could occur at proximity of the cofactor-binding sites and reduce the catalytic activity. Could be deacetylated by SIRT3.

It localises to the mitochondrion matrix. The enzyme catalyses a medium-chain 2,3-saturated fatty acyl-CoA + oxidized [electron-transfer flavoprotein] + H(+) = a medium-chain (2E)-enoyl-CoA + reduced [electron-transfer flavoprotein]. It catalyses the reaction pentanoyl-CoA + oxidized [electron-transfer flavoprotein] + H(+) = (2E)-pentenoyl-CoA + reduced [electron-transfer flavoprotein]. It carries out the reaction hexanoyl-CoA + oxidized [electron-transfer flavoprotein] + H(+) = (2E)-hexenoyl-CoA + reduced [electron-transfer flavoprotein]. The catalysed reaction is octanoyl-CoA + oxidized [electron-transfer flavoprotein] + H(+) = (2E)-octenoyl-CoA + reduced [electron-transfer flavoprotein]. The enzyme catalyses decanoyl-CoA + oxidized [electron-transfer flavoprotein] + H(+) = (2E)-decenoyl-CoA + reduced [electron-transfer flavoprotein]. It catalyses the reaction dodecanoyl-CoA + oxidized [electron-transfer flavoprotein] + H(+) = (2E)-dodecenoyl-CoA + reduced [electron-transfer flavoprotein]. It carries out the reaction tetradecanoyl-CoA + oxidized [electron-transfer flavoprotein] + H(+) = (2E)-tetradecenoyl-CoA + reduced [electron-transfer flavoprotein]. The catalysed reaction is oxidized [electron-transfer flavoprotein] + hexadecanoyl-CoA + H(+) = (2E)-hexadecenoyl-CoA + reduced [electron-transfer flavoprotein]. Its pathway is lipid metabolism; mitochondrial fatty acid beta-oxidation. Medium-chain specific acyl-CoA dehydrogenase is one of the acyl-CoA dehydrogenases that catalyze the first step of mitochondrial fatty acid beta-oxidation, an aerobic process breaking down fatty acids into acetyl-CoA and allowing the production of energy from fats. The first step of fatty acid beta-oxidation consists in the removal of one hydrogen from C-2 and C-3 of the straight-chain fatty acyl-CoA thioester, resulting in the formation of trans-2-enoyl-CoA. Electron transfer flavoprotein (ETF) is the electron acceptor that transfers electrons to the main mitochondrial respiratory chain via ETF-ubiquinone oxidoreductase (ETF dehydrogenase). Among the different mitochondrial acyl-CoA dehydrogenases, medium-chain specific acyl-CoA dehydrogenase acts specifically on acyl-CoAs with saturated 6 to 12 carbons long primary chains. This Homo sapiens (Human) protein is Medium-chain specific acyl-CoA dehydrogenase, mitochondrial.